A 248-amino-acid chain; its full sequence is tRNA (guanine-N(1)-)-methyltransferase (248 aa).

S-adenosyl-L-methionine is bound by residues G113 and 133–138; that span reads IGDFVL.

Belongs to the RNA methyltransferase TrmD family. Homodimer.

It is found in the cytoplasm. The catalysed reaction is guanosine(37) in tRNA + S-adenosyl-L-methionine = N(1)-methylguanosine(37) in tRNA + S-adenosyl-L-homocysteine + H(+). Its function is as follows. Specifically methylates guanosine-37 in various tRNAs. The protein is tRNA (guanine-N(1)-)-methyltransferase of Dehalococcoides mccartyi (strain CBDB1).